A 210-amino-acid polypeptide reads, in one-letter code: Thymidylate kinase (210 aa).

Position 10-17 (10-17 (GPEGAGKS)) interacts with ATP.

It belongs to the thymidylate kinase family.

The enzyme catalyses dTMP + ATP = dTDP + ADP. Its function is as follows. Phosphorylation of dTMP to form dTDP in both de novo and salvage pathways of dTTP synthesis. This Pseudomonas aeruginosa (strain UCBPP-PA14) protein is Thymidylate kinase.